A 305-amino-acid polypeptide reads, in one-letter code: Glyceraldehyde-3-phosphate dehydrogenase 2, cytosolic (305 aa).

2 residues coordinate NAD(+): Asp-3 and Arg-50. D-glyceraldehyde 3-phosphate contacts are provided by residues 121-123 (SCT), Thr-152, 181-182 (TG), and Arg-204. Cys-122 serves as the catalytic Nucleophile. Position 286 (Asn-286) interacts with NAD(+).

The protein belongs to the glyceraldehyde-3-phosphate dehydrogenase family. In terms of assembly, homotetramer.

It localises to the cytoplasm. The enzyme catalyses D-glyceraldehyde 3-phosphate + phosphate + NAD(+) = (2R)-3-phospho-glyceroyl phosphate + NADH + H(+). It participates in carbohydrate degradation; glycolysis; pyruvate from D-glyceraldehyde 3-phosphate: step 1/5. Functionally, key enzyme in glycolysis that catalyzes the first step of the pathway by converting D-glyceraldehyde 3-phosphate (G3P) into 3-phospho-D-glyceroyl phosphate. Essential for the maintenance of cellular ATP levels and carbohydrate metabolism. In Hordeum vulgare (Barley), this protein is Glyceraldehyde-3-phosphate dehydrogenase 2, cytosolic (GAPC).